A 143-amino-acid polypeptide reads, in one-letter code: Large ribosomal subunit protein uL11 (143 aa).

Belongs to the universal ribosomal protein uL11 family. In terms of assembly, part of the ribosomal stalk of the 50S ribosomal subunit. Interacts with L10 and the large rRNA to form the base of the stalk. L10 forms an elongated spine to which L12 dimers bind in a sequential fashion forming a multimeric L10(L12)X complex. In terms of processing, one or more lysine residues are methylated.

Functionally, forms part of the ribosomal stalk which helps the ribosome interact with GTP-bound translation factors. In Thioalkalivibrio sulfidiphilus (strain HL-EbGR7), this protein is Large ribosomal subunit protein uL11.